The following is a 513-amino-acid chain: MQLNSTEISELIKQRIAQFNVVSEAHNEGTIVSVSDGVIRIHGLADCMQGEMISLPGNRYAIALNLERDSVGAVVMGPYADLAEGMKVKCTGRILEVPVGRGLLGRVVNTLGAPIDGKGPVDNDGFSAVEAIAPGVIDRQSVDQPVQTGYKAVDSMIPIGRGQRELIIGDRQTGKTALAIDAIINQRDSGIKCIYVAIGQKASTISNVVRKLEEHGALANTIVVVATASESAALQYLAPYAGCAMGEYFRDRGEDALIIYDDLSKQAVAYRQISLLLRRPPGREAFPGDVFYLHSRLLERAARVNADYVEAYTKGEVKGKTGSLTALPIIETQAGDVSAFVPTNVISITDGQIFLESNLFNAGIRPAVNPGISVSRVGGAAQTKIMKKLSGGIRTALAQYRELAAFSQFASDLDDATRKQLDHGQKVTELLKQKQYAPMSVAQQSLVLFAAERGYLADVELAKIGSFEAALLAYVDRDHAPLMQEINQSGGYNDEIEGKLKGILDSFKATQSW.

169–176 (GDRQTGKT) serves as a coordination point for ATP.

The protein belongs to the ATPase alpha/beta chains family. In terms of assembly, F-type ATPases have 2 components, CF(1) - the catalytic core - and CF(0) - the membrane proton channel. CF(1) has five subunits: alpha(3), beta(3), gamma(1), delta(1), epsilon(1). CF(0) has three main subunits: a(1), b(2) and c(9-12). The alpha and beta chains form an alternating ring which encloses part of the gamma chain. CF(1) is attached to CF(0) by a central stalk formed by the gamma and epsilon chains, while a peripheral stalk is formed by the delta and b chains.

The protein localises to the cell inner membrane. It carries out the reaction ATP + H2O + 4 H(+)(in) = ADP + phosphate + 5 H(+)(out). Produces ATP from ADP in the presence of a proton gradient across the membrane. The alpha chain is a regulatory subunit. The polypeptide is ATP synthase subunit alpha (Salmonella arizonae (strain ATCC BAA-731 / CDC346-86 / RSK2980)).